The primary structure comprises 295 residues: Indole-3-glycerol phosphate synthase (295 aa).

This sequence belongs to the TrpC family.

It carries out the reaction 1-(2-carboxyphenylamino)-1-deoxy-D-ribulose 5-phosphate + H(+) = (1S,2R)-1-C-(indol-3-yl)glycerol 3-phosphate + CO2 + H2O. Its pathway is amino-acid biosynthesis; L-tryptophan biosynthesis; L-tryptophan from chorismate: step 4/5. The chain is Indole-3-glycerol phosphate synthase from Prochlorococcus marinus (strain MIT 9215).